Consider the following 768-residue polypeptide: Phosphoribosylformylglycinamidine synthase subunit PurL (768 aa).

His-48 is an active-site residue. ATP-binding residues include Tyr-51 and Lys-90. Glu-92 contacts Mg(2+). Substrate is bound by residues Ser-93 to His-96 and Arg-115. His-94 acts as the Proton acceptor in catalysis. Asp-116 lines the Mg(2+) pocket. Gln-239 lines the substrate pocket. A Mg(2+)-binding site is contributed by Asp-267. Glu-311 to Gln-313 is a binding site for substrate. Asp-507 and Gly-544 together coordinate ATP. Mg(2+) is bound at residue Asn-545. Residue Ser-547 participates in substrate binding.

This sequence belongs to the FGAMS family. In terms of assembly, monomer. Part of the FGAM synthase complex composed of 1 PurL, 1 PurQ and 2 PurS subunits.

It is found in the cytoplasm. It catalyses the reaction N(2)-formyl-N(1)-(5-phospho-beta-D-ribosyl)glycinamide + L-glutamine + ATP + H2O = 2-formamido-N(1)-(5-O-phospho-beta-D-ribosyl)acetamidine + L-glutamate + ADP + phosphate + H(+). The protein operates within purine metabolism; IMP biosynthesis via de novo pathway; 5-amino-1-(5-phospho-D-ribosyl)imidazole from N(2)-formyl-N(1)-(5-phospho-D-ribosyl)glycinamide: step 1/2. Its function is as follows. Part of the phosphoribosylformylglycinamidine synthase complex involved in the purines biosynthetic pathway. Catalyzes the ATP-dependent conversion of formylglycinamide ribonucleotide (FGAR) and glutamine to yield formylglycinamidine ribonucleotide (FGAM) and glutamate. The FGAM synthase complex is composed of three subunits. PurQ produces an ammonia molecule by converting glutamine to glutamate. PurL transfers the ammonia molecule to FGAR to form FGAM in an ATP-dependent manner. PurS interacts with PurQ and PurL and is thought to assist in the transfer of the ammonia molecule from PurQ to PurL. The sequence is that of Phosphoribosylformylglycinamidine synthase subunit PurL from Parasynechococcus marenigrum (strain WH8102).